A 79-amino-acid polypeptide reads, in one-letter code: Conotoxin Vi6.4 (79 aa).

Positions 1–22 (MKLTCVLIITVLFLTASQLITA) are cleaved as a signal peptide. A propeptide spanning residues 23–47 (DYSGDKRQYRAVRLRDEMRNFKGAR) is cleaved from the precursor. Disulfide bonds link cysteine 49–cysteine 62, cysteine 56–cysteine 67, and cysteine 61–cysteine 77. 2 positions are modified to 4-hydroxyproline: proline 60 and proline 63.

It belongs to the conotoxin O1 superfamily. In terms of tissue distribution, expressed by the venom duct.

It localises to the secreted. Ion channel inhibitor that inhibits the increase in intracellular calcium upon depolarization in DRG neurons. In vivo, both intraperitoneal and intracranial injections into mice induce hyperactivity. This chain is Conotoxin Vi6.4, found in Conus virgo (Virgin cone).